The chain runs to 415 residues: JmjC domain-containing protein C (415 aa).

The segment at 97-140 (NEKNNQSNNNNNNNNNNNNNNNNNNNNNNNNNNNNNNNNNNKPK) is disordered. The segment covering 104–137 (NNNNNNNNNNNNNNNNNNNNNNNNNNNNNNNNNN) has biased composition (low complexity). The region spanning 127–302 (NNNNNNNNNN…ELLKSNKLWC (176 aa)) is the JmjC domain.

This Dictyostelium discoideum (Social amoeba) protein is JmjC domain-containing protein C (jcdC).